A 122-amino-acid polypeptide reads, in one-letter code: Protein TCL1B3 (122 aa).

The protein belongs to the TCL1 family.

In Mus musculus (Mouse), this protein is Protein TCL1B3 (Tcl1b3).